A 306-amino-acid polypeptide reads, in one-letter code: High osmolarity signaling protein MOS1 (306 aa).

The Cytoplasmic segment spans residues 1–23 (MEHSRPYGGRKRMSLGNILGDPF). Residues 24–44 (ALATISISLLAWFITFISCVI) form a helical membrane-spanning segment. Over 45–67 (AQVQANKNKGLPDKDNPDGNFPP) the chain is Extracellular. The helical transmembrane segment at 68 to 88 (FAWWAVVYSLFLIVGVVIVVA) threads the bilayer. At 89 to 96 (SDAIQTYH) the chain is on the cytoplasmic side. Residues 97-117 (VAVTGYLAGGMVLVTSGVNSL) traverse the membrane as a helical segment. Topologically, residues 118–126 (VYSKNGARE) are extracellular. Residues 127 to 147 (AAAAGFILLSMVVIVWIFYFG) traverse the membrane as a helical segment. Residues 148 to 306 (STPSSTPRAF…IAPSNYLILL (159 aa)) lie on the Cytoplasmic side of the membrane. A disordered region spans residues 204–242 (FENPSPVGGASQAPTAPTMPTYGNNTMQPNNKSNDEEVL). Residues 224-235 (TYGNNTMQPNNK) show a composition bias toward polar residues. The SH3 domain maps to 246-306 (DYPYQAKAIY…IAPSNYLILL (61 aa)).

Belongs to the SHO1 family. As to quaternary structure, forms homooligomers.

The protein localises to the cell membrane. Plasma membrane osmosensor that activates the high osmolarity glycerol (HOG) MAPK signaling pathway in response to high osmolarity. Affects fungal virulence. The polypeptide is High osmolarity signaling protein MOS1 (MOS1) (Metarhizium robertsii (strain ARSEF 23 / ATCC MYA-3075) (Metarhizium anisopliae (strain ARSEF 23))).